Consider the following 468-residue polypeptide: Cysteine--tRNA ligase (468 aa).

Residue C29 coordinates Zn(2+). The 'HIGH' region motif lies at 31 to 41 (PTVYNYIHIGN). Zn(2+) contacts are provided by C209, H234, and E238. Positions 266 to 270 (KMSKS) match the 'KMSKS' region motif. Position 269 (K269) interacts with ATP.

Belongs to the class-I aminoacyl-tRNA synthetase family. As to quaternary structure, monomer. Zn(2+) serves as cofactor.

The protein localises to the cytoplasm. The enzyme catalyses tRNA(Cys) + L-cysteine + ATP = L-cysteinyl-tRNA(Cys) + AMP + diphosphate. The protein is Cysteine--tRNA ligase of Brevibacillus brevis (strain 47 / JCM 6285 / NBRC 100599).